The sequence spans 67 residues: DNA-directed RNA polymerase subunit omega (67 aa).

Belongs to the RNA polymerase subunit omega family. As to quaternary structure, the RNAP catalytic core consists of 2 alpha, 1 beta, 1 beta' and 1 omega subunit. When a sigma factor is associated with the core the holoenzyme is formed, which can initiate transcription.

It catalyses the reaction RNA(n) + a ribonucleoside 5'-triphosphate = RNA(n+1) + diphosphate. Functionally, promotes RNA polymerase assembly. Latches the N- and C-terminal regions of the beta' subunit thereby facilitating its interaction with the beta and alpha subunits. The protein is DNA-directed RNA polymerase subunit omega of Polynucleobacter asymbioticus (strain DSM 18221 / CIP 109841 / QLW-P1DMWA-1) (Polynucleobacter necessarius subsp. asymbioticus).